The sequence spans 236 residues: Baculoviral IAP repeat-containing protein 8 (236 aa).

One copy of the BIR repeat lies at W7–L70. Residues C39, C42, H59, and C66 each coordinate Zn(2+). The RING-type zinc-finger motif lies at C189–N224.

It belongs to the IAP family. In terms of assembly, binds to caspase-9.

It is found in the cytoplasm. In terms of biological role, protects against apoptosis mediated by BAX. This is Baculoviral IAP repeat-containing protein 8 (BIRC8) from Gorilla gorilla gorilla (Western lowland gorilla).